Here is a 541-residue protein sequence, read N- to C-terminus: Nif-specific regulatory protein (541 aa).

In terms of domain architecture, GAF spans 23–158; it reads RLETTLNNFV…MAANLAGRAI (136 aa). The tract at residues 170–191 is disordered; sequence TFAEEQQEQQNSRDEQSQSSAR. The 229-residue stretch at 200-428 folds into the Sigma-54 factor interaction domain; it reads IIGESTALMT…LENCVRRTAT (229 aa). ATP is bound by residues 228–235 and 291–300; these read GETGTGKE and ANGGTLLLDE. Positions 429-498 are inter-domain linker; it reads LARSKTITSS…SAGVASNLIE (70 aa). The a divalent metal cation site is built by Cys442 and Cys447. The tract at residues 499–541 is C-terminal DNA-binding domain; that stretch reads RDRLISALEEAGWNQAKAARILEKTPRQVGYALRRHGVDVRKL. Residues 513-532 constitute a DNA-binding region (H-T-H motif); the sequence is QAKAARILEKTPRQVGYALR.

As to quaternary structure, interacts with sigma-54.

Required for activation of most nif operons, which are directly involved in nitrogen fixation. The sequence is that of Nif-specific regulatory protein (nifA) from Rhizobium meliloti (strain 1021) (Ensifer meliloti).